The following is a 367-amino-acid chain: MLRAVSRAVSRAAVRCAWRSGPSVARPLAMSRSPAPRAVSGAPLRPGTVLGTMEMGRRMDASASAATVRAFLERGLNELDTAFMYCDGQSESILGSLGLGLGSGDCTVKIATKANPWDGKSLKPDSVRSQLETSLKRLQCPRVDLFYLHAPDHGTPIVETLQACQQLHQEGKFVELGLSNYASWEVAEIYTLCKSNGWILPTVYQGMYNATTRQVETELLPCLRYFGLRFYAYNPLAGGLLTGKYRYEDKDGKQPEGRFFGNSWSETYRNRFWKEHHFEAIALVEKALKTTYGTSAPSMTSAALRWMYHHSQLQGTRGDAVILGMSSLEQLEQNLAATEEGPLEPAVVEAFNQAWNVVAHECPNYFR.

The N-terminal 46 residues, Met1 to Pro46, are a transit peptide targeting the mitochondrion. Residues Pro27–Pro46 are disordered. At Ser40 the chain carries Phosphoserine. Thr48 is modified (phosphothreonine). Asp80 provides a ligand contact to NADP(+). Tyr85 (proton donor) is an active-site residue. N6-acetyllysine is present on Lys136. Substrate is bound at residue His149. NADP(+) contacts are provided by residues Ser179 to Asn180, Gln205, Asn234 to Lys244, and Arg258. Lys244 carries the N6-succinyllysine modification. Ser263 is subject to Phosphoserine. Substrate-binding residues include Tyr268 and Arg271. Ser326–Asn334 provides a ligand contact to NADP(+). Residue Arg367 coordinates substrate.

Belongs to the aldo/keto reductase family. Aldo/keto reductase 2 subfamily. In terms of assembly, homodimer. Heterodimer with AKR7A1.

The protein resides in the mitochondrion. It localises to the golgi apparatus. The protein localises to the golgi stack. It is found in the cytoplasm. It catalyses the reaction 4-hydroxybutanoate + NADP(+) = succinate semialdehyde + NADPH + H(+). In terms of biological role, catalyzes the NADPH-dependent reduction of succinic semialdehyde to gamma-hydroxybutyrate. May have an important role in producing the neuromodulator gamma-hydroxybutyrate (GHB). Has broad substrate specificity. Can reduce the dialdehyde protein-binding form of aflatoxin B1 (AFB1) to the non-binding AFB1 dialcohol. Acts as a 2-carboxybenzaldehyde reductase. In Rattus norvegicus (Rat), this protein is Aflatoxin B1 aldehyde reductase member 2 (Akr7a2).